Consider the following 394-residue polypeptide: Phosphopentomutase (394 aa).

Mn(2+) contacts are provided by D14, D287, H292, D328, H329, and H340.

It belongs to the phosphopentomutase family. Mn(2+) is required as a cofactor.

It is found in the cytoplasm. The catalysed reaction is 2-deoxy-alpha-D-ribose 1-phosphate = 2-deoxy-D-ribose 5-phosphate. It catalyses the reaction alpha-D-ribose 1-phosphate = D-ribose 5-phosphate. It participates in carbohydrate degradation; 2-deoxy-D-ribose 1-phosphate degradation; D-glyceraldehyde 3-phosphate and acetaldehyde from 2-deoxy-alpha-D-ribose 1-phosphate: step 1/2. Its function is as follows. Isomerase that catalyzes the conversion of deoxy-ribose 1-phosphate (dRib-1-P) and ribose 1-phosphate (Rib-1-P) to deoxy-ribose 5-phosphate (dRib-5-P) and ribose 5-phosphate (Rib-5-P), respectively. The protein is Phosphopentomutase of Shouchella clausii (strain KSM-K16) (Alkalihalobacillus clausii).